Consider the following 61-residue polypeptide: Small ribosomal subunit protein uS14 (61 aa).

Zn(2+) is bound by residues Cys24, Cys27, Cys40, and Cys43.

Belongs to the universal ribosomal protein uS14 family. Zinc-binding uS14 subfamily. As to quaternary structure, part of the 30S ribosomal subunit. Contacts proteins S3 and S10. The cofactor is Zn(2+).

Binds 16S rRNA, required for the assembly of 30S particles and may also be responsible for determining the conformation of the 16S rRNA at the A site. The chain is Small ribosomal subunit protein uS14 from Moorella thermoacetica (strain ATCC 39073 / JCM 9320).